Reading from the N-terminus, the 114-residue chain is Pole-localizer protein TmaR (114 aa).

Residues R70–N111 adopt a coiled-coil conformation. Residues K89–K114 form a disordered region.

The protein belongs to the pole-localizer TmaR family.

Its subcellular location is the cytoplasm. Its function is as follows. Pole-localizer protein involved in the regulation of several cellular processes. This is Pole-localizer protein TmaR from Haemophilus influenzae (strain 86-028NP).